Reading from the N-terminus, the 315-residue chain is Thymidylate synthase (315 aa).

Residues R22 and 177–178 (RR) contribute to the dUMP site. C197 acts as the Nucleophile in catalysis. Residues 217–220 (RSAD), N228, and 258–260 (HLY) contribute to the dUMP site. Residue D220 participates in (6R)-5,10-methylene-5,6,7,8-tetrahydrofolate binding. (6R)-5,10-methylene-5,6,7,8-tetrahydrofolate is bound at residue A314.

The protein belongs to the thymidylate synthase family. Bacterial-type ThyA subfamily. Homodimer.

It is found in the cytoplasm. It carries out the reaction dUMP + (6R)-5,10-methylene-5,6,7,8-tetrahydrofolate = 7,8-dihydrofolate + dTMP. It participates in pyrimidine metabolism; dTTP biosynthesis. Catalyzes the reductive methylation of 2'-deoxyuridine-5'-monophosphate (dUMP) to 2'-deoxythymidine-5'-monophosphate (dTMP) while utilizing 5,10-methylenetetrahydrofolate (mTHF) as the methyl donor and reductant in the reaction, yielding dihydrofolate (DHF) as a by-product. This enzymatic reaction provides an intracellular de novo source of dTMP, an essential precursor for DNA biosynthesis. This chain is Thymidylate synthase, found in Enterococcus faecalis (strain ATCC 700802 / V583).